Here is a 310-residue protein sequence, read N- to C-terminus: Probable endonuclease 4 (310 aa).

The disordered stretch occupies residues 1-31; the sequence is MNNQQSRGALGTSGATPDLPDATPGLSRNPV. His-94, His-134, Glu-173, Asp-207, His-210, His-244, Asp-257, His-259, and Glu-289 together coordinate Zn(2+).

It belongs to the AP endonuclease 2 family. Zn(2+) serves as cofactor.

It carries out the reaction Endonucleolytic cleavage to 5'-phosphooligonucleotide end-products.. Endonuclease IV plays a role in DNA repair. It cleaves phosphodiester bonds at apurinic or apyrimidinic (AP) sites, generating a 3'-hydroxyl group and a 5'-terminal sugar phosphate. This Streptomyces avermitilis (strain ATCC 31267 / DSM 46492 / JCM 5070 / NBRC 14893 / NCIMB 12804 / NRRL 8165 / MA-4680) protein is Probable endonuclease 4.